A 172-amino-acid chain; its full sequence is uncharacterized protein (172 aa).

The Lumenal segment spans residues 1–101; that stretch reads MEHVSKRSIG…RYDINTRPLV (101 aa). The chain crosses the membrane as a helical span at residues 102-122; that stretch reads VVLAISIVFFGCLLVLKDIII. At 123–145 the chain is on the cytoplasmic side; the sequence is QSSENILSVSKWKIIGASFMGTP. A helical transmembrane segment spans residues 146–164; the sequence is YTGLLTGLVGPLLSPFSAV. Residues 165–172 lie on the Lumenal side of the membrane; sequence SSWLSFIF.

The protein resides in the endoplasmic reticulum membrane. This is an uncharacterized protein from Saccharomyces cerevisiae (strain ATCC 204508 / S288c) (Baker's yeast).